The primary structure comprises 364 residues: Peptide chain release factor 1 (364 aa).

Q237 is modified (N5-methylglutamine).

Belongs to the prokaryotic/mitochondrial release factor family. In terms of processing, methylated by PrmC. Methylation increases the termination efficiency of RF1.

Its subcellular location is the cytoplasm. In terms of biological role, peptide chain release factor 1 directs the termination of translation in response to the peptide chain termination codons UAG and UAA. The polypeptide is Peptide chain release factor 1 (Mycoplasma mycoides subsp. mycoides SC (strain CCUG 32753 / NCTC 10114 / PG1)).